We begin with the raw amino-acid sequence, 181 residues long: NAD(P)H-quinone oxidoreductase subunit I, chloroplastic (181 aa).

4Fe-4S ferredoxin-type domains lie at 55–84 (GRIH…VDWE) and 95–124 (KSYS…MTEE). 8 residues coordinate [4Fe-4S] cluster: C64, C67, C70, C74, C104, C107, C110, and C114.

Belongs to the complex I 23 kDa subunit family. In terms of assembly, NDH is composed of at least 16 different subunits, 5 of which are encoded in the nucleus. It depends on [4Fe-4S] cluster as a cofactor.

It is found in the plastid. The protein localises to the chloroplast thylakoid membrane. It catalyses the reaction a plastoquinone + NADH + (n+1) H(+)(in) = a plastoquinol + NAD(+) + n H(+)(out). The enzyme catalyses a plastoquinone + NADPH + (n+1) H(+)(in) = a plastoquinol + NADP(+) + n H(+)(out). NDH shuttles electrons from NAD(P)H:plastoquinone, via FMN and iron-sulfur (Fe-S) centers, to quinones in the photosynthetic chain and possibly in a chloroplast respiratory chain. The immediate electron acceptor for the enzyme in this species is believed to be plastoquinone. Couples the redox reaction to proton translocation, and thus conserves the redox energy in a proton gradient. The polypeptide is NAD(P)H-quinone oxidoreductase subunit I, chloroplastic (Physcomitrium patens (Spreading-leaved earth moss)).